Here is a 446-residue protein sequence, read N- to C-terminus: Rhamnogalacturonase A (446 aa).

The first 18 residues, Met-1 to Gly-18, serve as a signal peptide directing secretion. A disulfide bridge links Cys-39 with Cys-65. N-linked (GlcNAc...) asparagine glycans are attached at residues Asn-50, Asn-115, and Asn-124. Asp-216 (proton donor) is an active-site residue. Cys-218 and Cys-235 are oxidised to a cystine. N-linked (GlcNAc...) asparagine glycans are attached at residues Asn-236, Asn-281, and Asn-318. Cystine bridges form between Cys-341–Cys-347 and Cys-369–Cys-378.

This sequence belongs to the glycosyl hydrolase 28 family.

It is found in the secreted. The catalysed reaction is Endohydrolysis of alpha-D-GalA-(1-&gt;2)-alpha-L-Rha glycosidic bond in the rhamnogalacturonan I backbone with initial inversion of anomeric configuration releasing oligosaccharides with beta-D-GalA at the reducing end.. In terms of biological role, pectinolytic enzymes consist of four classes of enzymes: pectine lyase, polygalacturonase, pectin methylesterase and rhamnogalacturonase. Hydrolyzes alpha-D-galacturonopyranosyl-(1,2)-alpha-L-rhamnopyranosyl linkages in the backbone of the hairy regions of pectins. In Aspergillus niger, this protein is Rhamnogalacturonase A (rhgA).